A 248-amino-acid chain; its full sequence is Granulin (248 aa).

It belongs to the polyhedrin family.

Functionally, component of the virus occlusion bodies, which are large proteinaceous structures, that protect the virus from the outside environment for extended periods until they are ingested by insect larvae. The polypeptide is Granulin (Cydia pomonella (Codling moth)).